Consider the following 68-residue polypeptide: Large ribosomal subunit protein bL31 (68 aa).

Residues C16, C18, C36, and C39 each coordinate Zn(2+).

Belongs to the bacterial ribosomal protein bL31 family. Type A subfamily. Part of the 50S ribosomal subunit. The cofactor is Zn(2+).

Its function is as follows. Binds the 23S rRNA. The chain is Large ribosomal subunit protein bL31 from Lachnospira eligens (strain ATCC 27750 / DSM 3376 / VPI C15-48 / C15-B4) (Eubacterium eligens).